Here is a 330-residue protein sequence, read N- to C-terminus: Putative glycosyltransferase HI_0258 (330 aa).

Positions 1-31 are enriched in basic and acidic residues; sequence MTDRQTDRQTDRQTDRQTDRQTDRQTDRQTD. Residues 1 to 32 form a disordered region; sequence MTDRQTDRQTDRQTDRQTDRQTDRQTDRQTDG. Residues 44-49 and 140-141 each bind UDP; these read SSDHYY and DV. Residues D140, D142, and H270 each contribute to the Mn(2+) site. 270-276 is a UDP binding site; sequence HYCGPNK.

The protein belongs to the glycosyltransferase 8 family.

This chain is Putative glycosyltransferase HI_0258, found in Haemophilus influenzae (strain ATCC 51907 / DSM 11121 / KW20 / Rd).